We begin with the raw amino-acid sequence, 863 residues long: Alanine--tRNA ligase (863 aa).

H552, H556, C654, and H658 together coordinate Zn(2+).

It belongs to the class-II aminoacyl-tRNA synthetase family. Zn(2+) is required as a cofactor.

It localises to the cytoplasm. The enzyme catalyses tRNA(Ala) + L-alanine + ATP = L-alanyl-tRNA(Ala) + AMP + diphosphate. Catalyzes the attachment of alanine to tRNA(Ala) in a two-step reaction: alanine is first activated by ATP to form Ala-AMP and then transferred to the acceptor end of tRNA(Ala). Also edits incorrectly charged Ser-tRNA(Ala) and Gly-tRNA(Ala) via its editing domain. The polypeptide is Alanine--tRNA ligase (Nitrosomonas europaea (strain ATCC 19718 / CIP 103999 / KCTC 2705 / NBRC 14298)).